We begin with the raw amino-acid sequence, 467 residues long: E3 ubiquitin-protein ligase TRIM11 (467 aa).

The RING-type zinc-finger motif lies at 16-57 (CAICLDYFTDPVMTDCGHNFCRECIRRCWGQPEGPYACPECR). A Phosphoserine modification is found at Ser85. The B box-type zinc finger occupies 87–127 (VPQGVCAAHREPLTTFCGDDLSLLCPTCERSEHWAHRVRPL). Zn(2+)-binding residues include Cys92, His95, Cys114, and His119. A coiled-coil region spans residues 127 to 207 (LQEAADDLKG…KLEEEELEVL (81 aa)). Positions 267–460 (ELRTVCRVPG…MTICRLIGVS (194 aa)) constitute a B30.2/SPRY domain. Positions 304-313 (DRRSVQRGEQ) are enriched in basic and acidic residues. Positions 304 to 325 (DRRSVQRGEQRQALPDSPERFD) are disordered.

The protein belongs to the TRIM/RBCC family. Binds cytoplasmic tail of integrin alpha-1. Interacts with the HN peptide. Interacts with PHOX2B. Interacts (when autoubiquitinated) with SQSTM1/p62; promoting AIM2 recruitment to autophagosomes. Interacts with AIM2; promoting its autophagy-dependent degradation. In terms of processing, autoubiquitinated upon DNA stimulation; autoubiquitination promotes interaction with SQSTM1/p62 and recruitment of AIM2 to autophagosomes.

It localises to the cytoplasm. The protein localises to the nucleus. The catalysed reaction is S-ubiquitinyl-[E2 ubiquitin-conjugating enzyme]-L-cysteine + [acceptor protein]-L-lysine = [E2 ubiquitin-conjugating enzyme]-L-cysteine + N(6)-ubiquitinyl-[acceptor protein]-L-lysine.. It participates in protein modification; protein ubiquitination. Its function is as follows. E3 ubiquitin-protein ligase that promotes the degradation of insoluble ubiquitinated proteins, including insoluble PAX6, poly-Gln repeat expanded HTT and poly-Ala repeat expanded ARX. Mediates PAX6 ubiquitination leading to proteasomal degradation, thereby modulating cortical neurogenesis. May also inhibit PAX6 transcriptional activity, possibly in part by preventing the binding of PAX6 to its consensus sequences. May contribute to the regulation of the intracellular level of HN (humanin) or HN-containing proteins through the proteasomal degradation pathway. Mediates MED15 ubiquitination leading to proteasomal degradation. May contribute to the innate restriction of retroviruses. Upon overexpression, reduces HIV-1 and murine leukemia virus infectivity, by suppressing viral gene expression. Antiviral activity depends on a functional E3 ubiquitin-protein ligase domain. May regulate TRIM5 turnover via the proteasome pathway, thus counteracting the TRIM5-mediated cross-species restriction of retroviral infection at early stages of the retroviral life cycle. Acts as an inhibitor of the AIM2 inflammasome by promoting autophagy-dependent degradation of AIM2. Mechanistically, undergoes autoubiquitination upon DNA stimulation, promoting interaction with AIM2 and SQSTM1/p62, leading to AIM2 recruitment to autophagosomes. This is E3 ubiquitin-protein ligase TRIM11 (Trim11) from Rattus norvegicus (Rat).